We begin with the raw amino-acid sequence, 296 residues long: Formamidopyrimidine-DNA glycosylase (296 aa).

Proline 2 serves as the catalytic Schiff-base intermediate with DNA. The active-site Proton donor is the glutamate 3. Residue lysine 61 is the Proton donor; for beta-elimination activity of the active site. DNA is bound by residues histidine 104, arginine 128, and lysine 174. The segment at 260 to 294 (HAYGQQGQACDRCGSNIIREKFANRSSHFCPRCQL) adopts an FPG-type zinc-finger fold. The Proton donor; for delta-elimination activity role is filled by arginine 284.

This sequence belongs to the FPG family. In terms of assembly, monomer. Requires Zn(2+) as cofactor.

The enzyme catalyses Hydrolysis of DNA containing ring-opened 7-methylguanine residues, releasing 2,6-diamino-4-hydroxy-5-(N-methyl)formamidopyrimidine.. It carries out the reaction 2'-deoxyribonucleotide-(2'-deoxyribose 5'-phosphate)-2'-deoxyribonucleotide-DNA = a 3'-end 2'-deoxyribonucleotide-(2,3-dehydro-2,3-deoxyribose 5'-phosphate)-DNA + a 5'-end 5'-phospho-2'-deoxyribonucleoside-DNA + H(+). Its function is as follows. Involved in base excision repair of DNA damaged by oxidation or by mutagenic agents. Acts as a DNA glycosylase that recognizes and removes damaged bases. Has a preference for oxidized purines, such as 7,8-dihydro-8-oxoguanine (8-oxoG). Has AP (apurinic/apyrimidinic) lyase activity and introduces nicks in the DNA strand. Cleaves the DNA backbone by beta-delta elimination to generate a single-strand break at the site of the removed base with both 3'- and 5'-phosphates. In Corynebacterium diphtheriae (strain ATCC 700971 / NCTC 13129 / Biotype gravis), this protein is Formamidopyrimidine-DNA glycosylase.